The following is a 1385-amino-acid chain: DNA-directed RNA polymerase subunit beta' (1385 aa).

Zn(2+) is bound by residues cysteine 72, cysteine 74, cysteine 87, and cysteine 90. Mg(2+) contacts are provided by aspartate 467, aspartate 469, and aspartate 471. Residues cysteine 829, cysteine 910, cysteine 917, and cysteine 920 each coordinate Zn(2+).

The protein belongs to the RNA polymerase beta' chain family. In terms of assembly, the RNAP catalytic core consists of 2 alpha, 1 beta, 1 beta' and 1 omega subunit. When a sigma factor is associated with the core the holoenzyme is formed, which can initiate transcription. Mg(2+) is required as a cofactor. Zn(2+) serves as cofactor.

The enzyme catalyses RNA(n) + a ribonucleoside 5'-triphosphate = RNA(n+1) + diphosphate. DNA-dependent RNA polymerase catalyzes the transcription of DNA into RNA using the four ribonucleoside triphosphates as substrates. The sequence is that of DNA-directed RNA polymerase subunit beta' from Elusimicrobium minutum (strain Pei191).